A 358-amino-acid chain; its full sequence is Variant-surface-glycoprotein phospholipase C (358 aa).

Residues 25–198 (IGQVYMVGAH…STRRIFLVVR (174 aa)) form the PI-PLC X-box domain.

In terms of assembly, monomer. In terms of processing, the N-terminus is blocked.

The protein resides in the membrane. It carries out the reaction a 6-(alpha-D-glucosaminyl)-1-(1,2-diacyl-sn-glycero-3-phospho)-1D-myo-inositol = 6-(alpha-D-glucosaminyl)-1D-myo-inositol 1,2-cyclic phosphate + a 1,2-diacyl-sn-glycerol. Its function is as follows. By hydrolysis of the attached glycolipid, releases soluble variant surface glycoprotein containing phosphoinositol from the cell wall of T.brucei after cell lysis. It also cleaves similar membrane anchors on some mammalian proteins. VSG lipase may play a role in processes such as parasite differentiation or antigenic variation. This chain is Variant-surface-glycoprotein phospholipase C, found in Trypanosoma brucei brucei.